The following is a 340-amino-acid chain: Glycerol-3-phosphate dehydrogenase [NAD(P)+] (340 aa).

NADPH is bound by residues serine 11, tryptophan 12, arginine 33, and lysine 106. Sn-glycerol 3-phosphate-binding residues include lysine 106, glycine 137, and serine 139. An NADPH-binding site is contributed by alanine 141. 5 residues coordinate sn-glycerol 3-phosphate: lysine 192, aspartate 245, serine 255, arginine 256, and asparagine 257. Residue lysine 192 is the Proton acceptor of the active site. Residue arginine 256 participates in NADPH binding. Residues valine 280 and glutamate 282 each coordinate NADPH.

This sequence belongs to the NAD-dependent glycerol-3-phosphate dehydrogenase family.

Its subcellular location is the cytoplasm. The enzyme catalyses sn-glycerol 3-phosphate + NAD(+) = dihydroxyacetone phosphate + NADH + H(+). It carries out the reaction sn-glycerol 3-phosphate + NADP(+) = dihydroxyacetone phosphate + NADPH + H(+). Its pathway is membrane lipid metabolism; glycerophospholipid metabolism. Its function is as follows. Catalyzes the reduction of the glycolytic intermediate dihydroxyacetone phosphate (DHAP) to sn-glycerol 3-phosphate (G3P), the key precursor for phospholipid synthesis. The chain is Glycerol-3-phosphate dehydrogenase [NAD(P)+] from Bacillus mycoides (strain KBAB4) (Bacillus weihenstephanensis).